A 95-amino-acid chain; its full sequence is Turripeptide OL184 (95 aa).

Contains 5 disulfide bonds. In terms of tissue distribution, expressed by the venom duct.

It localises to the secreted. Its function is as follows. Acts as a neurotoxin by inhibiting an ion channel. In Iotyrris olangoensis (Sea snail), this protein is Turripeptide OL184.